The chain runs to 158 residues: SH3 domain-binding glutamic acid-rich protein homolog (158 aa).

Basic and acidic residues predominate over residues 40-51 (TEPGKESEKELM). Positions 40-74 (TEPGKESEKELMQNKSTSNGGTVSDPEPRHPLPPQ) are disordered. A compositionally biased stretch (polar residues) spans 52-61 (QNKSTSNGGT). Positions 67-73 (PRHPLPP) match the SH3-binding motif. Thr109 bears the Phosphothreonine mark. Positions 118–158 (LKQENGDAKKEEAETEAEDKKTEAGDGDVDVKEEAAEKAEV) are disordered.

Belongs to the SH3BGR family.

The polypeptide is SH3 domain-binding glutamic acid-rich protein homolog (Sh3beta) (Drosophila melanogaster (Fruit fly)).